The primary structure comprises 203 residues: Glutathione S-transferase (203 aa).

The 78-residue stretch at 2 to 79 (PDYKVYYFNV…YLANQVGLAG (78 aa)) folds into the GST N-terminal domain. Glutathione is bound by residues Tyr-8, Trp-39, Lys-43, 49–51 (GQM), and 63–64 (QS). The 123-residue stretch at 81 to 203 (DDWENLMIDT…YIAKRPITEV (123 aa)) folds into the GST C-terminal domain.

This sequence belongs to the GST superfamily. Sigma family. Homodimer.

It catalyses the reaction RX + glutathione = an S-substituted glutathione + a halide anion + H(+). Its function is as follows. Conjugation of reduced glutathione to a wide number of exogenous and endogenous hydrophobic electrophiles. This Anopheles gambiae (African malaria mosquito) protein is Glutathione S-transferase (GstS1).